We begin with the raw amino-acid sequence, 120 residues long: Response regulator receiver protein CpdR (120 aa).

Residues 3–117 enclose the Response regulatory domain; it reads RILLAEDDND…DLVNEIEKML (115 aa). Aspartate 52 carries the 4-aspartylphosphate modification.

Post-translationally, is phosphorylated by ChpT-P on Asp-52.

It is found in the cytoplasm. Component of a regulatory phosphorelay system that controls B.abortus cell growth, division, and intracellular survival inside mammalian host cells. This signaling pathway is composed of CckA, ChpT, CtrA and CpdR. CpdR is a response regulator substrate of ChpT. Unphosphorylated CpdR controls steady-state levels of CtrA in the B.abortus cell, likely via CtrA destabilization and activation of its proteolysis. The sequence is that of Response regulator receiver protein CpdR from Brucella abortus (strain 2308).